A 229-amino-acid polypeptide reads, in one-letter code: Translation initiation factor 6 (229 aa).

The protein belongs to the eIF-6 family.

Its function is as follows. Binds to the 50S ribosomal subunit and prevents its association with the 30S ribosomal subunit to form the 70S initiation complex. The chain is Translation initiation factor 6 from Thermococcus kodakarensis (strain ATCC BAA-918 / JCM 12380 / KOD1) (Pyrococcus kodakaraensis (strain KOD1)).